We begin with the raw amino-acid sequence, 323 residues long: Ribosomal RNA small subunit methyltransferase H (323 aa).

S-adenosyl-L-methionine is bound by residues 39-41 (GGY), Asp57, Phe84, Asp103, and Gln110.

This sequence belongs to the methyltransferase superfamily. RsmH family.

The protein localises to the cytoplasm. It catalyses the reaction cytidine(1402) in 16S rRNA + S-adenosyl-L-methionine = N(4)-methylcytidine(1402) in 16S rRNA + S-adenosyl-L-homocysteine + H(+). Its function is as follows. Specifically methylates the N4 position of cytidine in position 1402 (C1402) of 16S rRNA. The polypeptide is Ribosomal RNA small subunit methyltransferase H (Gluconobacter oxydans (strain 621H) (Gluconobacter suboxydans)).